The primary structure comprises 618 residues: Keratin, type I cytoskeletal 9 (618 aa).

Positions 1–49 are disordered; it reads MSFRQISSSFRSSSGSSCGGGGGRGASRGSMRSSFGRSSRAGGESRFGS. The head stretch occupies residues 1–137; the sequence is MSFRQISSSF…GGEGSILNTN (137 aa). The span at 7–16 shows a compositional bias: low complexity; sequence SSSFRSSSGS. A phosphoserine mark is found at Ser-14 and Ser-17. Residues 17–26 are compositionally biased toward gly residues; the sequence is SCGGGGGRGA. Residues 27–49 show a composition bias toward low complexity; that stretch reads SRGSMRSSFGRSSRAGGESRFGS. The coil 1A stretch occupies residues 138 to 173; the sequence is EKVVMQNLNSRLASYMDKVQELEEDNANLEKQIQEW. One can recognise an IF rod domain in the interval 138–450; it reads EKVVMQNLNS…KLLEGGQQDF (313 aa). Positions 174 to 192 are linker 1; the sequence is YSRKGNRVFQKDYSHYYNT. Residues 193 to 284 are coil 1B; sequence IEDLKDRIVD…KSHKEEMNQL (92 aa). Residues 285-307 are linker 12; sequence TGLNDGDVNVEINVAPSTDLTQV. Residues 308–446 are coil 2; that stretch reads LNDMREEYEH…ETYRKLLEGG (139 aa). The tract at residues 447 to 609 is tail; the sequence is QQDFESSGAG…GGGNTRPSQS (163 aa). A disordered region spans residues 449–618; the sequence is DFESSGAGQI…SQSSQIPRLR (170 aa). A compositionally biased stretch (gly residues) spans 456-603; sequence GQIGFGSGKG…GSGGSYGGGN (148 aa). Over residues 607-618 the composition is skewed to low complexity; it reads SQSQSSQIPRLR.

Belongs to the intermediate filament family. Heterotetramer of two type I and two type II keratins. In terms of tissue distribution, expressed in the perinuclear ring of spermatid manchettes within testis and in keratinocytes of the suprabasal layer of footpad epidermis (at protein level).

May serve an important special function either in the mature palmar and plantar skin tissue or in the morphogenetic program of the formation of these tissues. Plays a role in keratin filament assembly. May be involved in spermatid nuclear shaping and sperm development. The sequence is that of Keratin, type I cytoskeletal 9 (Krt9) from Rattus norvegicus (Rat).